Consider the following 193-residue polypeptide: Acyl carrier protein phosphodiesterase (193 aa).

The protein belongs to the AcpH family.

It catalyses the reaction holo-[ACP] + H2O = apo-[ACP] + (R)-4'-phosphopantetheine + H(+). Its function is as follows. Converts holo-ACP to apo-ACP by hydrolytic cleavage of the phosphopantetheine prosthetic group from ACP. This Klebsiella pneumoniae (strain 342) protein is Acyl carrier protein phosphodiesterase.